Reading from the N-terminus, the 585-residue chain is YTH domain-containing family protein 3 (585 aa).

Disordered stretches follow at residues 1–52, 243–277, and 304–351; these read MSAT…YPPM, RKPAKPQPKLKPKGNVGIGGSAVPPPPIKHNMNIG, and PQPL…QQLQ. Residue S2 is modified to N-acetylserine. Residues 15–24 show a composition bias toward polar residues; sequence NKVSVQNGSI. A Phosphoserine modification is found at S23. Positions 244–254 are enriched in basic residues; that stretch reads KPAKPQPKLKP. Positions 329–351 are enriched in low complexity; sequence QQQQGPQPQAQPHQVQPQQQQLQ. The region spanning 416–550 is the YTH domain; it reads GRVFIIKSYS…EKAKQVLKII (135 aa). RNA contacts are provided by residues 422-424, D428, 438-439, N468, W492, and W497; these read KSY and WC.

This sequence belongs to the YTHDF family. YTHDF3 subfamily. As to quaternary structure, interacts with CNOT1; promoting recruitment of the CCR4-NOT complex. Interacts with YTHDF1. Interacts with YTHDF2. Interacts with PAN3. In terms of processing, (Microbial infection) Proteolytically cleaved by HIV-1 protease when incorporated into HIV-1 particles in a nucleocapsid-dependent-manner. Cleavage by HIV-1 protease probably ensures optimal infectivity of the mature virion.

Its subcellular location is the cytoplasm. The protein localises to the cytosol. It localises to the P-body. The protein resides in the stress granule. Specifically recognizes and binds N6-methyladenosine (m6A)-containing RNAs, and regulates their stability. M6A is a modification present at internal sites of mRNAs and some non-coding RNAs and plays a role in mRNA stability and processing. Acts as a regulator of mRNA stability by promoting degradation of m6A-containing mRNAs via interaction with the CCR4-NOT complex or PAN3. The YTHDF paralogs (YTHDF1, YTHDF2 and YTHDF3) share m6A-containing mRNAs targets and act redundantly to mediate mRNA degradation and cellular differentiation. Acts as a negative regulator of type I interferon response by down-regulating interferon-stimulated genes (ISGs) expression: acts by binding to FOXO3 mRNAs. Binds to FOXO3 mRNAs independently of METTL3-mediated m6A modification. Can also act as a regulator of mRNA stability in cooperation with YTHDF2 by binding to m6A-containing mRNA and promoting their degradation. Recognizes and binds m6A-containing circular RNAs (circRNAs); circRNAs are generated through back-splicing of pre-mRNAs, a non-canonical splicing process promoted by dsRNA structures across circularizing exons. Promotes formation of phase-separated membraneless compartments, such as P-bodies or stress granules, by undergoing liquid-liquid phase separation upon binding to mRNAs containing multiple m6A-modified residues: polymethylated mRNAs act as a multivalent scaffold for the binding of YTHDF proteins, juxtaposing their disordered regions and thereby leading to phase separation. The resulting mRNA-YTHDF complexes then partition into different endogenous phase-separated membraneless compartments, such as P-bodies, stress granules or neuronal RNA granules. May also recognize and bind N1-methyladenosine (m1A)-containing mRNAs: inhibits trophoblast invasion by binding to m1A-methylated transcripts of IGF1R, promoting their degradation. Its function is as follows. Has some antiviral activity against HIV-1 virus: incorporated into HIV-1 particles in a nucleocapsid-dependent manner and reduces viral infectivity in the next cycle of infection. May interfere with this early step of the viral life cycle by binding to N6-methyladenosine (m6A) modified sites on the HIV-1 RNA genome. In Homo sapiens (Human), this protein is YTH domain-containing family protein 3.